The following is a 462-amino-acid chain: Exodeoxyribonuclease 7 large subunit (462 aa).

It belongs to the XseA family. In terms of assembly, heterooligomer composed of large and small subunits.

The protein localises to the cytoplasm. The catalysed reaction is Exonucleolytic cleavage in either 5'- to 3'- or 3'- to 5'-direction to yield nucleoside 5'-phosphates.. Functionally, bidirectionally degrades single-stranded DNA into large acid-insoluble oligonucleotides, which are then degraded further into small acid-soluble oligonucleotides. The polypeptide is Exodeoxyribonuclease 7 large subunit (Pectobacterium atrosepticum (strain SCRI 1043 / ATCC BAA-672) (Erwinia carotovora subsp. atroseptica)).